Consider the following 221-residue polypeptide: Probable GTP-binding protein EngB (221 aa).

One can recognise an EngB-type G domain in the interval 32–205; that stretch reads GIPQIAFAGR…RKIVDSLITT (174 aa). GTP is bound by residues 40-47, 67-71, 85-88, 152-155, and 184-186; these read GRSNAGKS, GKTKL, DLPG, TKID, and VSN. The Mg(2+) site is built by Ser47 and Thr69.

Belongs to the TRAFAC class TrmE-Era-EngA-EngB-Septin-like GTPase superfamily. EngB GTPase family. Requires Mg(2+) as cofactor.

Necessary for normal cell division and for the maintenance of normal septation. The polypeptide is Probable GTP-binding protein EngB (Leptospira borgpetersenii serovar Hardjo-bovis (strain JB197)).